The sequence spans 289 residues: Proteasome assembly chaperone 1 (289 aa).

The disordered stretch occupies residues 1-38 (MAATFFGEVVKAPCRAGTEEEEEEEEQSRRDTPEDREV). Ala-2 carries the N-acetylalanine modification. Thr-18 carries the post-translational modification Phosphothreonine. Basic and acidic residues predominate over residues 27-38 (QSRRDTPEDREV). A Phosphothreonine modification is found at Thr-55. Ser-181 carries the post-translational modification Phosphoserine. Lys-265 is subject to N6-acetyllysine.

Belongs to the PSMG1 family. In terms of assembly, forms a heterodimer with PSMG2. The PSMG1-PSMG2 heterodimer interacts directly with the PSMA5 and PSMA7 proteasome alpha subunits. In terms of processing, degraded by the proteasome upon completion of 20S proteasome maturation. Highly expressed in testis with moderate expression in brain, liver and kidney and low levels in heart, skeletal muscle and pancreas.

Its subcellular location is the cytoplasm. It localises to the endoplasmic reticulum. Its function is as follows. Chaperone protein which promotes assembly of the 20S proteasome as part of a heterodimer with PSMG2. The PSMG1-PSMG2 heterodimer binds to the PSMA5 and PSMA7 proteasome subunits, promotes assembly of the proteasome alpha subunits into the heteroheptameric alpha ring and prevents alpha ring dimerization. The polypeptide is Proteasome assembly chaperone 1 (Mus musculus (Mouse)).